The sequence spans 249 residues: Orotidine 5'-phosphate decarboxylase (249 aa).

Residues D21, K43, 72-81 (DLKLYDIPET), T128, R193, Q204, G224, and R225 contribute to the substrate site. K74 (proton donor) is an active-site residue.

This sequence belongs to the OMP decarboxylase family. Type 1 subfamily. As to quaternary structure, homodimer.

The enzyme catalyses orotidine 5'-phosphate + H(+) = UMP + CO2. It participates in pyrimidine metabolism; UMP biosynthesis via de novo pathway; UMP from orotate: step 2/2. Its function is as follows. Catalyzes the decarboxylation of orotidine 5'-monophosphate (OMP) to uridine 5'-monophosphate (UMP). This chain is Orotidine 5'-phosphate decarboxylase, found in Desulfosudis oleivorans (strain DSM 6200 / JCM 39069 / Hxd3) (Desulfococcus oleovorans).